Reading from the N-terminus, the 321-residue chain is tRNA U34 carboxymethyltransferase (321 aa).

Carboxy-S-adenosyl-L-methionine is bound by residues Lys90, Trp104, Lys109, Gly129, 151–153 (DPT), 180–181 (IE), Met195, Tyr199, and Arg314.

The protein belongs to the class I-like SAM-binding methyltransferase superfamily. CmoB family. Homotetramer.

The enzyme catalyses carboxy-S-adenosyl-L-methionine + 5-hydroxyuridine(34) in tRNA = 5-carboxymethoxyuridine(34) in tRNA + S-adenosyl-L-homocysteine + H(+). In terms of biological role, catalyzes carboxymethyl transfer from carboxy-S-adenosyl-L-methionine (Cx-SAM) to 5-hydroxyuridine (ho5U) to form 5-carboxymethoxyuridine (cmo5U) at position 34 in tRNAs. In Histophilus somni (strain 129Pt) (Haemophilus somnus), this protein is tRNA U34 carboxymethyltransferase.